The chain runs to 180 residues: Acireductone dioxygenase (180 aa).

His-97, His-99, Glu-103, and His-141 together coordinate Fe(2+). 4 residues coordinate Ni(2+): His-97, His-99, Glu-103, and His-141.

The protein belongs to the acireductone dioxygenase (ARD) family. As to quaternary structure, monomer. It depends on Fe(2+) as a cofactor. The cofactor is Ni(2+).

The enzyme catalyses 1,2-dihydroxy-5-(methylsulfanyl)pent-1-en-3-one + O2 = 3-(methylsulfanyl)propanoate + CO + formate + 2 H(+). It carries out the reaction 1,2-dihydroxy-5-(methylsulfanyl)pent-1-en-3-one + O2 = 4-methylsulfanyl-2-oxobutanoate + formate + 2 H(+). The protein operates within amino-acid biosynthesis; L-methionine biosynthesis via salvage pathway; L-methionine from S-methyl-5-thio-alpha-D-ribose 1-phosphate: step 5/6. Catalyzes 2 different reactions between oxygen and the acireductone 1,2-dihydroxy-3-keto-5-methylthiopentene (DHK-MTPene) depending upon the metal bound in the active site. Fe-containing acireductone dioxygenase (Fe-ARD) produces formate and 2-keto-4-methylthiobutyrate (KMTB), the alpha-ketoacid precursor of methionine in the methionine recycle pathway. Ni-containing acireductone dioxygenase (Ni-ARD) produces methylthiopropionate, carbon monoxide and formate, and does not lie on the methionine recycle pathway. This Cronobacter sakazakii (Enterobacter sakazakii) protein is Acireductone dioxygenase.